A 335-amino-acid polypeptide reads, in one-letter code: ATP-dependent 6-phosphofructokinase (335 aa).

Position 11 (Gly-11) interacts with ATP. ADP is bound at residue 21 to 25 (RAVVR). ATP is bound by residues 72-73 (RY) and 102-105 (GDGS). Residue Asp-103 participates in Mg(2+) binding. 125-127 (TID) is a binding site for substrate. Asp-127 acts as the Proton acceptor in catalysis. Arg-154 contributes to the ADP binding site. Substrate contacts are provided by residues Arg-162 and 169–171 (MGR). Residues 185 to 187 (GAD) and 213 to 215 (KKH) each bind ADP. Residues Glu-222, Arg-244, and 250–253 (HIQR) each bind substrate.

This sequence belongs to the phosphofructokinase type A (PFKA) family. ATP-dependent PFK group I subfamily. Prokaryotic clade 'B1' sub-subfamily. Homotetramer. The cofactor is Mg(2+).

It localises to the cytoplasm. It catalyses the reaction beta-D-fructose 6-phosphate + ATP = beta-D-fructose 1,6-bisphosphate + ADP + H(+). Its pathway is carbohydrate degradation; glycolysis; D-glyceraldehyde 3-phosphate and glycerone phosphate from D-glucose: step 3/4. Its activity is regulated as follows. Allosterically activated by ADP and other diphosphonucleosides, and allosterically inhibited by phosphoenolpyruvate. Catalyzes the phosphorylation of D-fructose 6-phosphate to fructose 1,6-bisphosphate by ATP, the first committing step of glycolysis. In Streptococcus pneumoniae serotype 4 (strain ATCC BAA-334 / TIGR4), this protein is ATP-dependent 6-phosphofructokinase.